Consider the following 152-residue polypeptide: Transcriptional repressor NrdR (152 aa).

A zinc finger spans residues 3 to 34; the sequence is CPFCNHGELKVIDSRNAPEANAIKRRRECLNC. The 91-residue stretch at 48–138 folds into the ATP-cone domain; it reads LQVLKRDGRY…VYRRFKDVGE (91 aa).

This sequence belongs to the NrdR family. Zn(2+) serves as cofactor.

Its function is as follows. Negatively regulates transcription of bacterial ribonucleotide reductase nrd genes and operons by binding to NrdR-boxes. The polypeptide is Transcriptional repressor NrdR (Chlamydia abortus (strain DSM 27085 / S26/3) (Chlamydophila abortus)).